Here is a 314-residue protein sequence, read N- to C-terminus: ATP synthase gamma chain (314 aa).

This sequence belongs to the ATPase gamma chain family. F-type ATPases have 2 components, CF(1) - the catalytic core - and CF(0) - the membrane proton channel. CF(1) has five subunits: alpha(3), beta(3), gamma(1), delta(1), epsilon(1). CF(0) has three main subunits: a, b and c.

The protein resides in the cell membrane. Produces ATP from ADP in the presence of a proton gradient across the membrane. The gamma chain is believed to be important in regulating ATPase activity and the flow of protons through the CF(0) complex. This Limosilactobacillus reuteri (strain DSM 20016) (Lactobacillus reuteri) protein is ATP synthase gamma chain.